The chain runs to 124 residues: Fluoride-specific ion channel FluC (124 aa).

Transmembrane regions (helical) follow at residues L4–F24, F35–G55, I60–S80, and V102–S122. Residues G74 and T77 each contribute to the Na(+) site.

Belongs to the fluoride channel Fluc/FEX (TC 1.A.43) family.

The protein resides in the cell inner membrane. The catalysed reaction is fluoride(in) = fluoride(out). Its activity is regulated as follows. Na(+) is not transported, but it plays an essential structural role and its presence is essential for fluoride channel function. Fluoride-specific ion channel. Important for reducing fluoride concentration in the cell, thus reducing its toxicity. This is Fluoride-specific ion channel FluC from Shewanella oneidensis (strain ATCC 700550 / JCM 31522 / CIP 106686 / LMG 19005 / NCIMB 14063 / MR-1).